Here is a 303-residue protein sequence, read N- to C-terminus: Glutamate formimidoyltransferase (303 aa).

Histidine 81 acts as the For formimidoyltransferase activity in catalysis. 164–172 (GPSVVGKAG) lines the folate pocket.

It belongs to the formiminotransferase family.

It localises to the cytoplasm. The catalysed reaction is (6S)-5-formyl-5,6,7,8-tetrahydrofolate + L-glutamate = N-formyl-L-glutamate + (6S)-5,6,7,8-tetrahydrofolate + H(+). The enzyme catalyses 5-formimidoyltetrahydrofolate + L-glutamate = N-formimidoyl-L-glutamate + (6S)-5,6,7,8-tetrahydrofolate. It catalyses the reaction (6S)-5-formyl-5,6,7,8-tetrahydrofolate + ATP = (6R)-5,10-methenyltetrahydrofolate + ADP + phosphate. It functions in the pathway amino-acid degradation; L-histidine degradation into L-glutamate; L-glutamate from N-formimidoyl-L-glutamate (transferase route): step 1/1. It participates in one-carbon metabolism; tetrahydrofolate interconversion. Its function is as follows. Catalyzes the transfer of the formyl group from N-formylglutamate to tetrahydrofolate (THF) to yield 5-formyltetrahydrofolate (5-CHO-THF) and glutamate (Glu). The triglutamate form of 5-CHO-THF (5-CHO-THF-Glu3) can also be used as substrate. It can also catalyze the transfer of the formimino group from N-formiminoglutamate to tetrahydrofolate (THF) to yield 5-formiminotetrahydrofolate (5-NH=CH-THF) and glutamate (Glu). It can replace YgfA to catalyze the irreversible ATP-dependent transformation of 5-CHO-THF to form 5,10-methenyltetrahydrofolate (5,10-CH=THF). This is Glutamate formimidoyltransferase from Thermoplasma acidophilum (strain ATCC 25905 / DSM 1728 / JCM 9062 / NBRC 15155 / AMRC-C165).